We begin with the raw amino-acid sequence, 578 residues long: CTP synthase 2 (578 aa).

One can recognise a Glutamine amidotransferase type-1 domain in the interval 305-564 (KIALVGKYTN…VAAASGTLGD (260 aa)). Catalysis depends on for GATase activity residues Cys-404, His-537, and Glu-539.

It belongs to the CTP synthase family. As to quaternary structure, homodimer. Oligomerizes to a tetramer in the presence of its substrates UTP and ATP. It depends on Mg(2+) as a cofactor.

It localises to the cytoplasm. The enzyme catalyses UTP + L-glutamine + ATP + H2O = CTP + L-glutamate + ADP + phosphate + 2 H(+). Its pathway is pyrimidine metabolism; CTP biosynthesis via de novo pathway; CTP from UDP: step 2/2. Its activity is regulated as follows. Activated by GTP. Subject to allosteric product inhibition by CTP. Inhibited by p-chloromercuriphenylsulfonic acid, N-ethylmaleimide and cyclopentenylcytosine (CPEC). Its function is as follows. Catalyzes the ATP-dependent amination of UTP to CTP with either L-glutamine or ammonia as the source of nitrogen. Plays an important role in the regulation of phospholipid synthesis. This chain is CTP synthase 2 (URA8), found in Saccharomyces cerevisiae (strain YJM789) (Baker's yeast).